Here is a 176-residue protein sequence, read N- to C-terminus: Dual-action ribosomal maturation protein DarP (176 aa).

It belongs to the DarP family.

It localises to the cytoplasm. Its function is as follows. Member of a network of 50S ribosomal subunit biogenesis factors which assembles along the 30S-50S interface, preventing incorrect 23S rRNA structures from forming. Promotes peptidyl transferase center (PTC) maturation. This chain is Dual-action ribosomal maturation protein DarP, found in Actinobacillus pleuropneumoniae serotype 5b (strain L20).